The sequence spans 491 residues: UDP-GalNAc:beta-1,3-N-acetylgalactosaminyltransferase 2 (491 aa).

Topologically, residues 1–2 (MR) are cytoplasmic. Residues 3-23 (SAAAALSVCVLAVLLHWICWT) traverse the membrane as a helical; Signal-anchor for type II membrane protein segment. Residues 24–491 (DRSAELLGFR…NKCGDPCGCS (468 aa)) are Lumenal-facing. N-linked (GlcNAc...) asparagine glycans are attached at residues Asn-167 and Asn-230.

This sequence belongs to the glycosyltransferase 31 family.

It is found in the golgi apparatus membrane. The protein resides in the endoplasmic reticulum. It catalyses the reaction 3-O-(N-acetyl-beta-D-glucosaminyl-(1-&gt;4)-alpha-D-mannosyl)-L-threonyl-[protein] + UDP-N-acetyl-alpha-D-galactosamine = 3-O-[beta-D-GalNAc-(1-&gt;3)-beta-D-GlcNAc-(1-&gt;4)-alpha-D-Man]-L-Thr-[protein] + UDP + H(+). The protein operates within protein modification; protein glycosylation. Its function is as follows. Beta-1,3-N-acetylgalactosaminyltransferase that synthesizes a unique carbohydrate structure, GalNAc-beta-1-3GlcNAc, on N- and O-glycans. Has no galactose nor galactosaminyl transferase activity toward any acceptor substrate. Involved in alpha-dystroglycan (dag1) glycosylation. This is UDP-GalNAc:beta-1,3-N-acetylgalactosaminyltransferase 2 (b3galnt2) from Danio rerio (Zebrafish).